A 183-amino-acid chain; its full sequence is Ribosome rescue factor SmrB (183 aa).

In terms of domain architecture, Smr spans 98–173; it reads LDLHGLTQLQ…GDAALLVLIE (76 aa).

The protein belongs to the SmrB family. In terms of assembly, associates with collided ribosomes, but not with correctly translating polysomes.

Acts as a ribosome collision sensor. Detects stalled/collided disomes (pairs of ribosomes where the leading ribosome is stalled and a second ribosome has collided with it) and endonucleolytically cleaves mRNA at the 5' boundary of the stalled ribosome. Stalled/collided disomes form a new interface (primarily via the 30S subunits) that binds SmrB. Cleaved mRNA becomes available for tmRNA ligation, leading to ribosomal subunit dissociation and rescue of stalled ribosomes. The protein is Ribosome rescue factor SmrB of Shigella boydii serotype 18 (strain CDC 3083-94 / BS512).